Consider the following 1044-residue polypeptide: Elongation factor 3A (1044 aa).

Ser-2 carries the post-translational modification N-acetylserine. The HEAT 1 repeat unit spans residues 5 to 42 (QQSIKVLEELFQKLSVATADNRHEIASEVASFLNGNII). Positions 42, 44, and 83 each coordinate ADP. HEAT repeat units follow at residues 86 to 123 (PYIVQLVPAICTNAGNKDKEIQSVASETLISIVNAVNP), 125 to 162 (AIKALLPHLTNAIVETNKWQEKIAILAAISAMVDAAKD), 166 to 203 (LRMPELIPVLSETMWDTKKEVKAAATAAMTKATETVDN), 205 to 241 (DIERFIPSLIQCIADPTEVPETVHLLGATTFVAEVTP), 242 to 279 (ATLSIMVPLLSRGLNERETGIKRKSAVIIDNMCKLVED), and 285 to 323 (PFLGKLLPGLKSNFATIADPEAREVTLRALKTLRRVGNV). Lys-187 and Lys-196 each carry N6,N6,N6-trimethyllysine. A Glycyl lysine isopeptide (Lys-Gly) (interchain with G-Cter in ubiquitin) cross-link involves residue Lys-350. ADP contacts are provided by Thr-392, His-396, and Glu-397. An ABC transporter 1 domain is found at 426–641 (DEGEDLCNCE…CPAAKAYEEL (216 aa)). Lys-636 is covalently cross-linked (Glycyl lysine isopeptide (Lys-Gly) (interchain with G-Cter in ubiquitin)). A Phosphoserine modification is found at Ser-642. In terms of domain architecture, ABC transporter 2 spans 667 to 993 (VKVTNMEFQY…AGPRIEKKED (327 aa)). Asn-703 lines the ADP pocket. Lys-789 carries the N6,N6,N6-trimethyllysine modification. Residues Glu-922, Asn-925, and His-951 each coordinate ADP. Thr-972 is subject to Phosphothreonine. Position 974 is a phosphoserine (Ser-974). A disordered region spans residues 974 to 1044 (SGHNWVSGQG…DAYVSSDEEF (71 aa)). Over residues 1007 to 1031 (GGKKKKKLSSAELRKKKKERMKKKK) the composition is skewed to basic residues. 2 positions are modified to phosphoserine: Ser-1039 and Ser-1040.

It belongs to the ABC transporter superfamily. ABCF family. EF3 subfamily. Monomer. Interacts with elongation factor 1A (eEF1A). Interacts through its N-terminus with 18S rRNA. Associates with ribosomes; preferentially binds ribosomes in the post-translocational state (bearing a peptidyl-tRNA in the P-site) in the presence of ATP, suggesting that ATP hydrolysis is required for ribosome dissociation.

Its subcellular location is the cytoplasm. It localises to the cytosol. The enzyme catalyses ATP + H2O = ADP + phosphate + H(+). It functions in the pathway protein biosynthesis; polypeptide chain elongation. Its activity is regulated as follows. Inhibited by the translational inhibitors neomycin and alpha-sarcin, which suppress the ATPase activity. Functionally, ribosome-dependent ATPase that functions in cytoplasmic translation elongation. Required for the ATP-dependent release of deacylated tRNA from the ribosomal E-site during protein biosynthesis. Stimulates the eEF1A-dependent binding of aminoacyl-tRNA to the ribosomal A-site, which has reduced affinity for tRNA as long as the E-site is occupied. Assists translation termination by stimulating the release of nascent protein from the ribosome by release factors. In nutrient-replete conditions, occupies the space on the ribosome bound by GCN1 during amino acid starvation conditions, and therefore indirectly negatively regulates GCN2 kinase activity in replete conditions. This Saccharomyces cerevisiae (strain ATCC 204508 / S288c) (Baker's yeast) protein is Elongation factor 3A (YEF3).